Here is a 338-residue protein sequence, read N- to C-terminus: Deoxyhypusine hydroxylase (338 aa).

5 HEAT-like PBS-type repeats span residues 71 to 97 (LKHE…VLKD), 104 to 130 (CRHE…LKDD), 200 to 233 (QRYR…GLKD), 238 to 264 (FRHE…CLSN), and 271 to 298 (VRHE…FLND). Histidine 73, glutamate 74, histidine 106, and glutamate 107 together coordinate Fe cation. Residues histidine 240, glutamate 241, histidine 273, and glutamate 274 each contribute to the Fe cation site.

It belongs to the deoxyhypusine hydroxylase family. The cofactor is Fe(2+).

The protein localises to the cytoplasm. The protein resides in the nucleus. It carries out the reaction [eIF5A protein]-deoxyhypusine + AH2 + O2 = [eIF5A protein]-hypusine + A + H2O. It participates in protein modification; eIF5A hypusination. Functionally, catalyzes the hydroxylation of the N(6)-(4-aminobutyl)-L-lysine intermediate to form hypusine, an essential post-translational modification only found in mature eIF-5A factor. This is Deoxyhypusine hydroxylase (lia1) from Aspergillus niger (strain ATCC MYA-4892 / CBS 513.88 / FGSC A1513).